A 164-amino-acid polypeptide reads, in one-letter code: Phospholipase A and acyltransferase 4 (164 aa).

An essential for its ability regulate keratinocyte differentiation region spans residues 1–40 (MASPHQEPKPGDLIEIFRLGYEHWALYIGDGYVIHLAPPS). The Cytoplasmic segment spans residues 1-134 (MASPHQEPKP…SRCKQVEKAK (134 aa)). In terms of domain architecture, LRAT spans 13-129 (LIEIFRLGYE…LRYGKSRCKQ (117 aa)). Active-site residues include His-23 and His-35. Cys-113 (acyl-thioester intermediate) is an active-site residue. The segment at 124–164 (KSRCKQVEKAKVEVGVATALGILVVAGCSFAIRRYQKKATA) is interaction with TGM1. The chain crosses the membrane as a helical span at residues 135–155 (VEVGVATALGILVVAGCSFAI). The Lumenal portion of the chain corresponds to 156-164 (RRYQKKATA).

Belongs to the H-rev107 family. Interacts with TGM1. Widely expressed.

Its subcellular location is the membrane. It catalyses the reaction a 1,2-diacyl-sn-glycero-3-phosphocholine + H2O = a 1-acyl-sn-glycero-3-phosphocholine + a fatty acid + H(+). The catalysed reaction is a 1,2-diacyl-sn-glycero-3-phosphocholine + H2O = a 2-acyl-sn-glycero-3-phosphocholine + a fatty acid + H(+). It carries out the reaction 1,2-dihexadecanoyl-sn-glycero-3-phosphocholine + H2O = 1-hexadecanoyl-sn-glycero-3-phosphocholine + hexadecanoate + H(+). The enzyme catalyses 1,2-dihexadecanoyl-sn-glycero-3-phosphocholine + H2O = 2-hexadecanoyl-sn-glycero-3-phosphocholine + hexadecanoate + H(+). It catalyses the reaction 1-hexadecanoyl-2-(9Z-octadecenoyl)-sn-glycero-3-phosphocholine + H2O = 2-(9Z-octadecenoyl)-sn-glycero-3-phosphocholine + hexadecanoate + H(+). The catalysed reaction is 1-hexadecanoyl-2-(9Z-octadecenoyl)-sn-glycero-3-phosphocholine + H2O = 1-hexadecanoyl-sn-glycero-3-phosphocholine + (9Z)-octadecenoate + H(+). It carries out the reaction 1-hexadecanoyl-2-(5Z,8Z,11Z,14Z-eicosatetraenoyl)-sn-glycero-3-phosphocholine + H2O = 2-(5Z,8Z,11Z,14Z)-eicosatetraenoyl-sn-glycero-3-phosphocholine + hexadecanoate + H(+). The enzyme catalyses 1-hexadecanoyl-2-(9Z,12Z-octadecadienoyl)-sn-glycero-3-phosphoethanolamine + H2O = 1-hexadecanoyl-sn-glycero-3-phosphoethanolamine + (9Z,12Z)-octadecadienoate + H(+). It catalyses the reaction 1-hexadecanoyl-2-(9Z,12Z-octadecadienoyl)-sn-glycero-3-phosphoethanolamine + H2O = 2-(9Z,12Z)-octadecadienoyl-sn-glycero-3-phosphoethanolamine + hexadecanoate + H(+). The catalysed reaction is 1-hexadecanoyl-2-(5Z,8Z,11Z,14Z-eicosatetraenoyl)-sn-glycero-3-phosphoethanolamine + H2O = 2-(5Z,8Z,11Z,14Z)-eicosatetraenoyl-sn-glycero-3-phosphoethanolamine + hexadecanoate + H(+). It carries out the reaction 1-hexanoyl-2-acyl-sn-glycero-3-phosphocholine + H2O = hexanoate + a 2-acyl-sn-glycero-3-phosphocholine + H(+). The enzyme catalyses 1,2-diheptadecanoyl-sn-glycero-3-phosphoethanolamine + 1-(9Z-octadecenoyl)-2-hexadecanoyl-sn-glycero-3-phosphocholine = 1,2-diheptadecanoyl-sn-glycero-3-phospho-N-hexadecanoyl-ethanolamine + 1-(9Z-octadecenoyl)-sn-glycero-3-phosphocholine + H(+). It catalyses the reaction 1,2-diheptadecanoyl-sn-glycero-3-phosphoethanolamine + 1-(9Z-octadecenoyl)-2-hexadecanoyl-sn-glycero-3-phosphocholine = 1,2-diheptadecanoyl-sn-glycero-3-phospho-N-(9Z-octadecenoyl)-ethanolamine + 2-hexadecanoyl-sn-glycero-3-phosphocholine + H(+). Exhibits both phospholipase A1/2 and acyltransferase activities. Shows phospholipase A1 (PLA1) and A2 (PLA2), catalyzing the calcium-independent release of fatty acids from the sn-1 or sn-2 position of glycerophospholipids. For most substrates, PLA1 activity is much higher than PLA2 activity. Shows O-acyltransferase activity, catalyzing the transfer of a fatty acyl group from glycerophospholipid to the hydroxyl group of lysophospholipid. Shows N-acyltransferase activity, catalyzing the calcium-independent transfer of a fatty acyl group at the sn-1 position of phosphatidylcholine (PC) and other glycerophospholipids to the primary amine of phosphatidylethanolamine (PE), forming N-acylphosphatidylethanolamine (NAPE), which serves as precursor for N-acylethanolamines (NAEs). Promotes keratinocyte differentiation via activation of TGM1. The chain is Phospholipase A and acyltransferase 4 from Homo sapiens (Human).